A 71-amino-acid polypeptide reads, in one-letter code: Large ribosomal subunit protein bL31 (71 aa).

Residues Cys16, Cys18, Cys36, and Cys39 each contribute to the Zn(2+) site.

This sequence belongs to the bacterial ribosomal protein bL31 family. Type A subfamily. In terms of assembly, part of the 50S ribosomal subunit. The cofactor is Zn(2+).

Its function is as follows. Binds the 23S rRNA. The polypeptide is Large ribosomal subunit protein bL31 (Thermus thermophilus (strain ATCC BAA-163 / DSM 7039 / HB27)).